Reading from the N-terminus, the 137-residue chain is Large ribosomal subunit protein uL16 (137 aa).

It belongs to the universal ribosomal protein uL16 family. In terms of assembly, part of the 50S ribosomal subunit.

Functionally, binds 23S rRNA and is also seen to make contacts with the A and possibly P site tRNAs. The protein is Large ribosomal subunit protein uL16 of Alkalilimnicola ehrlichii (strain ATCC BAA-1101 / DSM 17681 / MLHE-1).